We begin with the raw amino-acid sequence, 1096 residues long: Serine/threonine-protein kinase mig-15 (1096 aa).

Residues 21-288 (FELIEVVGNG…TGALLRHPFI (268 aa)) form the Protein kinase domain. ATP is bound by residues 27–35 (VGNGTYGQV) and Lys50. The Proton acceptor role is filled by Asp151. Basic and acidic residues predominate over residues 293–315 (HEQTIRHSIKEHIDRNRRVKKDD). Disordered stretches follow at residues 293-351 (HEQT…MIPM), 380-492 (LPQQ…QQSR), 517-545 (KMGG…EASI), and 574-664 (NGEG…DLLP). The segment covering 316–328 (ADYEYSGSEDDEP) has biased composition (acidic residues). A compositionally biased stretch (low complexity) spans 380 to 393 (LPQQPAPAPFQYQQ). Basic and acidic residues-rich tracts occupy residues 397–408 (VEPRRESSEVKL) and 453–472 (NYEK…ERQA). A compositionally biased stretch (pro residues) spans 532–541 (SPPPPAPPPR). Over residues 629-642 (LDDDDSDSDNEEGN) the composition is skewed to acidic residues. The region spanning 778–1070 (SGEILCAALW…KFLCERNDKV (293 aa)) is the CNH domain.

This sequence belongs to the protein kinase superfamily. STE Ser/Thr protein kinase family. STE20 subfamily.

It catalyses the reaction L-seryl-[protein] + ATP = O-phospho-L-seryl-[protein] + ADP + H(+). The enzyme catalyses L-threonyl-[protein] + ATP = O-phospho-L-threonyl-[protein] + ADP + H(+). Functionally, involved in cell migration and signal transduction. Important in several developmental processes including epidermal development, Q neuroblast migrations and muscle arm targeting. Required with ina-1/pat-3 to stabilize the commissural axons growth cone along a precise direction and are required for the cell to respond appropriately when signaling in the growth cone must change. During gonad morphogenesis, involved in distal tip cell (DTC) migration from the dorsal side of the hermaphrodite body to the midbody to allow for formation of gonad arms. The protein is Serine/threonine-protein kinase mig-15 (mig-15) of Caenorhabditis elegans.